Here is a 2176-residue protein sequence, read N- to C-terminus: Methyl-CpG-binding domain-containing protein 9 (2176 aa).

Over residues 1 to 13 (MEPTDSTNEQLGD) the composition is skewed to polar residues. 2 disordered regions span residues 1–20 (MEPT…AAVK) and 28–85 (GIDL…RDAS). The PHD-type 1 zinc-finger motif lies at 83–133 (DASCGACGRPESIELVVVCDACERGFHMSCVNDGVEAAPSADWMCSDCRTG). The segment at 86–131 (CGACGRPESIELVVVCDACERGFHMSCVNDGVEAAPSADWMCSDCR) adopts an RING-type 1; degenerate zinc-finger fold. One can recognise an MBD domain in the interval 258–327 (RHFISERHGV…MDAEIRNENS (70 aa)). In terms of domain architecture, FYR N-terminal spans 403 to 456 (GCPMQFEDFFVLSLGRIDIRQSYHNVNVIYPIGYKSCWHDKITGSLFTCEVSDG). Residues 491–511 (EQNSDKLSNRRDSTQERDDDA) are a coiled coil. The 149-residue stretch at 550-698 (SSRVDFDKNL…ESCTNYRTLK (149 aa)) folds into the FYR C-terminal domain. 3 consecutive short sequence motifs (nuclear localization signal) follow at residues 914–921 (SRRGRKKD), 1124–1131 (KKRTYISV), and 1256–1263 (YRKLECLS). Residues 1098–1137 (PTKKAVLSLLADIRGGDLVQRSIKGTKKRTYISVSDVIMK) form a Pumilio repeat. Residues 1130–1245 (SVSDVIMKKC…EKFKSLYEAE (116 aa)) form the Bromo domain. The stretch at 1251–1273 (QKLKDYRKLECLSAEMKKEIKDI) forms a coiled coil. The segment at 1287 to 1337 (EGVCKVCGVDKDDDSVLLCDTCDAEYHTYCLNPPLIRIPDGNWYCPSCVIA) adopts a PHD-type 2 zinc-finger fold. The RING-type 2; degenerate zinc-finger motif lies at 1290–1335 (CKVCGVDKDDDSVLLCDTCDAEYHTYCLNPPLIRIPDGNWYCPSCV). Residues 1337–1344 (AKRMAQEA) carry the Nuclear localization signal motif. Positions 1410–1437 (QHLEQCAEAIIEMQQKLRSLSSEWKNAK) form a coiled coil. Disordered regions lie at residues 1472–1553 (GCDP…NLPE) and 1565–1595 (GRNH…QELQ). Composition is skewed to polar residues over residues 1492 to 1513 (SSTA…TQPG), 1523 to 1532 (KISSPETISS), and 1585 to 1595 (DASSQASQELQ). The stretch at 1588–1628 (SQASQELQACQQDLSATSNEIQNLQQSIRSIESQLLKQSIR) forms a coiled coil. The Nuclear localization signal signature appears at 1761 to 1768 (EKRYGPCI). The tract at residues 2136–2176 (IDETKPIISLPDQKSQPVSDSQERSSRVRRSGKKRKEPEGS) is disordered.

As to quaternary structure, interacts with histone H4. Expressed in leaves, buds, flowers and stems.

It localises to the nucleus. It catalyses the reaction L-lysyl-[protein] + acetyl-CoA = N(6)-acetyl-L-lysyl-[protein] + CoA + H(+). Functionally, probable transcriptional regulator that acts as a histone acetyltransferase. Mediates the acetylation of histone H3 and H4 of target loci (e.g. FLC). Involved in an auxin-independent regulation of shoot branching and flowering time. The polypeptide is Methyl-CpG-binding domain-containing protein 9 (MBD9) (Arabidopsis thaliana (Mouse-ear cress)).